A 645-amino-acid chain; its full sequence is tRNA 5-methylaminomethyl-2-thiouridine biosynthesis bifunctional protein MnmC (645 aa).

The interval 1 to 230 is tRNA (mnm(5)s(2)U34)-methyltransferase; that stretch reads MPMSEPIDWL…KRHNLHAVFD (230 aa). The segment at 254–645 is FAD-dependent cmnm(5)s(2)U34 oxidoreductase; sequence LGAGIAGAAA…LASERLGRRR (392 aa).

The protein in the N-terminal section; belongs to the methyltransferase superfamily. tRNA (mnm(5)s(2)U34)-methyltransferase family. In the C-terminal section; belongs to the DAO family. Requires FAD as cofactor.

The protein localises to the cytoplasm. It carries out the reaction 5-aminomethyl-2-thiouridine(34) in tRNA + S-adenosyl-L-methionine = 5-methylaminomethyl-2-thiouridine(34) in tRNA + S-adenosyl-L-homocysteine + H(+). Catalyzes the last two steps in the biosynthesis of 5-methylaminomethyl-2-thiouridine (mnm(5)s(2)U) at the wobble position (U34) in tRNA. Catalyzes the FAD-dependent demodification of cmnm(5)s(2)U34 to nm(5)s(2)U34, followed by the transfer of a methyl group from S-adenosyl-L-methionine to nm(5)s(2)U34, to form mnm(5)s(2)U34. The chain is tRNA 5-methylaminomethyl-2-thiouridine biosynthesis bifunctional protein MnmC from Delftia acidovorans (strain DSM 14801 / SPH-1).